The primary structure comprises 130 residues: Small ribosomal subunit protein uS9 (130 aa).

The tract at residues 111 to 130 is disordered; the sequence is VERKKVGLHKARRATQFSKR. Residues 116–130 are compositionally biased toward basic residues; the sequence is VGLHKARRATQFSKR.

The protein belongs to the universal ribosomal protein uS9 family.

The chain is Small ribosomal subunit protein uS9 from Xylella fastidiosa (strain M23).